Here is a 597-residue protein sequence, read N- to C-terminus: Probable translation initiation factor IF-2 (597 aa).

The tr-type G domain maps to 10-226 (LRTPIVAVLG…LMGLSQRFMK (217 aa)). The G1 stretch occupies residues 19–26 (GHVDHGKT). 19-26 (GHVDHGKT) is a GTP binding site. The tract at residues 44–48 (AITQH) is G2. The tract at residues 81–84 (DTPG) is G3. GTP is bound by residues 81-85 (DTPGH) and 135-138 (NKVD). Residues 135 to 138 (NKVD) form a G4 region. The G5 stretch occupies residues 203–205 (SAI).

Belongs to the TRAFAC class translation factor GTPase superfamily. Classic translation factor GTPase family. IF-2 subfamily.

Its function is as follows. Function in general translation initiation by promoting the binding of the formylmethionine-tRNA to ribosomes. Seems to function along with eIF-2. This Halorubrum lacusprofundi (strain ATCC 49239 / DSM 5036 / JCM 8891 / ACAM 34) protein is Probable translation initiation factor IF-2.